The primary structure comprises 275 residues: Myb/SANT-like DNA-binding domain-containing protein 3 (275 aa).

A Myb-like domain is found at 13–78; the sequence is FSELEKSILL…QLKKCWENIK (66 aa). A phosphoserine mark is found at Ser-96 and Ser-98. A Glycyl lysine isopeptide (Lys-Gly) (interchain with G-Cter in SUMO2) cross-link involves residue Lys-154. Residues 211–247 are a coiled coil; the sequence is QLIQMNEVHVAKIQQIERECEMAEEEHRIKMEVLNKK. At Ser-274 the chain carries Phosphoserine.

It belongs to the MSANTD3 family.

This Bos taurus (Bovine) protein is Myb/SANT-like DNA-binding domain-containing protein 3 (MSANTD3).